The chain runs to 278 residues: Putative phosphoenolpyruvate synthase regulatory protein (278 aa).

An ADP-binding site is contributed by 158–165 (GVSRSGKT).

It belongs to the pyruvate, phosphate/water dikinase regulatory protein family. PSRP subfamily.

The enzyme catalyses [pyruvate, water dikinase] + ADP = [pyruvate, water dikinase]-phosphate + AMP + H(+). The catalysed reaction is [pyruvate, water dikinase]-phosphate + phosphate + H(+) = [pyruvate, water dikinase] + diphosphate. In terms of biological role, bifunctional serine/threonine kinase and phosphorylase involved in the regulation of the phosphoenolpyruvate synthase (PEPS) by catalyzing its phosphorylation/dephosphorylation. The protein is Putative phosphoenolpyruvate synthase regulatory protein of Acinetobacter baumannii (strain AYE).